A 363-amino-acid chain; its full sequence is NADH-quinone oxidoreductase subunit H (363 aa).

10 consecutive transmembrane segments (helical) span residues 29 to 49, 62 to 82, 96 to 116, 127 to 147, 163 to 183, 202 to 222, 238 to 257, 264 to 286, 299 to 319, and 339 to 359; these read VLKI…YVVW, GPMY…KLLF, FVIA…VVPF, VGLL…ILAG, AAQV…VMIA, FFDW…VSGV, EIVA…LFFL, ILVS…QGWV, KGGW…YIWF, and FIPL…YGVI.

Belongs to the complex I subunit 1 family. As to quaternary structure, NDH-1 is composed of 14 different subunits. Subunits NuoA, H, J, K, L, M, N constitute the membrane sector of the complex.

Its subcellular location is the cell inner membrane. The enzyme catalyses a quinone + NADH + 5 H(+)(in) = a quinol + NAD(+) + 4 H(+)(out). NDH-1 shuttles electrons from NADH, via FMN and iron-sulfur (Fe-S) centers, to quinones in the respiratory chain. The immediate electron acceptor for the enzyme in this species is believed to be ubiquinone. Couples the redox reaction to proton translocation (for every two electrons transferred, four hydrogen ions are translocated across the cytoplasmic membrane), and thus conserves the redox energy in a proton gradient. This subunit may bind ubiquinone. The sequence is that of NADH-quinone oxidoreductase subunit H from Xanthomonas euvesicatoria pv. vesicatoria (strain 85-10) (Xanthomonas campestris pv. vesicatoria).